The following is a 156-amino-acid chain: Endoribonuclease YbeY (156 aa).

Zn(2+) is bound by residues histidine 122, histidine 126, and histidine 132.

The protein belongs to the endoribonuclease YbeY family. Zn(2+) serves as cofactor.

Its subcellular location is the cytoplasm. Its function is as follows. Single strand-specific metallo-endoribonuclease involved in late-stage 70S ribosome quality control and in maturation of the 3' terminus of the 16S rRNA. This chain is Endoribonuclease YbeY, found in Bacillus cereus (strain B4264).